The primary structure comprises 415 residues: Gamma-glutamyl phosphate reductase (415 aa).

It belongs to the gamma-glutamyl phosphate reductase family.

Its subcellular location is the cytoplasm. It catalyses the reaction L-glutamate 5-semialdehyde + phosphate + NADP(+) = L-glutamyl 5-phosphate + NADPH + H(+). Its pathway is amino-acid biosynthesis; L-proline biosynthesis; L-glutamate 5-semialdehyde from L-glutamate: step 2/2. In terms of biological role, catalyzes the NADPH-dependent reduction of L-glutamate 5-phosphate into L-glutamate 5-semialdehyde and phosphate. The product spontaneously undergoes cyclization to form 1-pyrroline-5-carboxylate. This is Gamma-glutamyl phosphate reductase from Listeria monocytogenes serovar 1/2a (strain ATCC BAA-679 / EGD-e).